The primary structure comprises 720 residues: Putative fatty acid oxidation complex trifunctional enzyme (720 aa).

The 3-hydroxyacyl-CoA dehydrogenase stretch occupies residues 1-384 (MQNEIKKVCV…SWKYGPFELL (384 aa)). Positions 453 to 720 (FVITTKMNCL…TIEKLKAIVK (268 aa)) are enoyl-CoA hydratase/isomerase.

The protein in the N-terminal section; belongs to the 3-hydroxyacyl-CoA dehydrogenase family. This sequence in the C-terminal section; belongs to the enoyl-CoA hydratase/isomerase family.

It carries out the reaction a (3S)-3-hydroxyacyl-CoA + NAD(+) = a 3-oxoacyl-CoA + NADH + H(+). The enzyme catalyses a (3S)-3-hydroxyacyl-CoA = a (2E)-enoyl-CoA + H2O. It catalyses the reaction a 4-saturated-(3S)-3-hydroxyacyl-CoA = a (3E)-enoyl-CoA + H2O. The catalysed reaction is a (3Z)-enoyl-CoA = a 4-saturated (2E)-enoyl-CoA. It carries out the reaction a (3E)-enoyl-CoA = a 4-saturated (2E)-enoyl-CoA. The polypeptide is Putative fatty acid oxidation complex trifunctional enzyme (Rickettsia felis (strain ATCC VR-1525 / URRWXCal2) (Rickettsia azadi)).